Here is a 402-residue protein sequence, read N- to C-terminus: MRTIEYDVVQDMIRNFTEQLQEISNEINSESIKKLAGSIKEKIEKNAFYLVVLGQFKRGKSTLINYMLGANLLPTGVLPLTSVITKIYYSPEVKVDVIFESGVKKEIPVDELDLYCTERGNPKNQKCVDTIEIGYPFDFLNKDVVIVDTPGIGSVYQHNTDVTYEFIDKSDAVVFVLSVDPPITEVEKQFLLKIAENVDKIFFVINKSDLTSKNEIEEIVSFTTNVIKDITKKGNINIFPLSAKMALEGKISKNEEMIEKSCVEIFEKELKQFLKEEKGKIQILSNLKSLDGFLGVCEAFLENDMKLKIMPVKQLEENIEKFNEFLERVNQNKIEIYKLFKIEMNDILQSFDDEMEKIKKELVVKITKKINDYYPSVARLKRIEQKEHLNKYLEKAIVEEFD.

It to M.genitalium MG148.

This is an uncharacterized protein from Caldicellulosiruptor sp. (strain Rt8B.4).